The chain runs to 342 residues: Glycerol-1-phosphate dehydrogenase [NAD(P)+] (342 aa).

Residues 84–88 (GRPID) and 106–109 (TAAS) contribute to the NAD(+) site. Asp111 is a substrate binding site. Ser115 is a binding site for NAD(+). Residue Asp160 participates in substrate binding. The Zn(2+) site is built by Asp160 and His241. Residue His245 participates in substrate binding. His260 serves as a coordination point for Zn(2+).

This sequence belongs to the glycerol-1-phosphate dehydrogenase family. Homodimer. Requires Zn(2+) as cofactor.

It is found in the cytoplasm. It carries out the reaction sn-glycerol 1-phosphate + NAD(+) = dihydroxyacetone phosphate + NADH + H(+). The enzyme catalyses sn-glycerol 1-phosphate + NADP(+) = dihydroxyacetone phosphate + NADPH + H(+). Its pathway is membrane lipid metabolism; glycerophospholipid metabolism. Catalyzes the NAD(P)H-dependent reduction of dihydroxyacetonephosphate (DHAP or glycerone phosphate) to glycerol 1-phosphate (G1P). The G1P thus generated is used as the glycerophosphate backbone of phospholipids in the cellular membranes of Archaea. This chain is Glycerol-1-phosphate dehydrogenase [NAD(P)+], found in Pyrobaculum aerophilum (strain ATCC 51768 / DSM 7523 / JCM 9630 / CIP 104966 / NBRC 100827 / IM2).